The primary structure comprises 127 residues: Ribonuclease P protein component 1 (127 aa).

The protein belongs to the eukaryotic/archaeal RNase P protein component 1 family. In terms of assembly, consists of a catalytic RNA component and at least 4-5 protein subunits.

It localises to the cytoplasm. The enzyme catalyses Endonucleolytic cleavage of RNA, removing 5'-extranucleotides from tRNA precursor.. Functionally, part of ribonuclease P, a protein complex that generates mature tRNA molecules by cleaving their 5'-ends. In Pyrococcus abyssi (strain GE5 / Orsay), this protein is Ribonuclease P protein component 1.